The following is a 741-amino-acid chain: Lamin-B receptor (741 aa).

The interval 29 to 126 (RLRRPRRTED…TGSGSGSSLP (98 aa)) is disordered. Low complexity-rich tracts occupy residues 57–84 (TRRTGSVTAAGATATATATAGPATRTRA) and 109–126 (PRSSVGPLTGSGSGSSLP). Residue S111 is modified to Phosphoserine. Position 135 is a phosphothreonine (T135). The residue at position 144 (S144) is a Phosphoserine. The segment covering 160 to 184 (TNTSSGAPNKAFNTSSVNSGNSFSR) has biased composition (polar residues). The segment at 160-194 (TNTSSGAPNKAFNTSSVNSGNSFSRTTTSSTTTTT) is disordered. The span at 185-194 (TTTSSTTTTT) shows a compositional bias: low complexity. Residues S223 and S225 each carry the phosphoserine modification. Residues 231–240 (LAGTPVTNTE) show a composition bias toward polar residues. The interval 231 to 277 (LAGTPVTNTEEGSRYSRSVSRSVYDDEKSSKRSYSTGEEDIDEEDEL) is disordered. Phosphothreonine is present on residues T234 and T237. A phosphoserine mark is found at S243, S246, S248, S250, and S263. T266 is subject to Phosphothreonine. Over residues 267–277 (GEEDIDEEDEL) the composition is skewed to acidic residues. A Phosphoserine modification is found at S284. T288 is modified (phosphothreonine). At S291 the chain carries Phosphoserine. T293 bears the Phosphothreonine mark. S298 carries the post-translational modification Phosphoserine. Transmembrane regions (helical) follow at residues 308–328 (FGGWLGAFLFLLLLPTAVYYL), 363–383 (VVGAFAAYQVVVFLLVALLPG), 402–422 (LTLLIASGVAEYLKYPVVTFV), 429–449 (FCIFGLVGAFVAAAWSYWLVD), 497–517 (LSLVTTLIYATCYIYQTLVWP), 543–563 (PATLFSASCLLFYVLDAIIFE), 577–599 (YGCLLLLRYAATPYLLTAVTKYF), and 604–624 (VPISCWYAPLAVAALLSLGLL). Phosphoserine occurs at positions 640 and 642. A helical membrane pass occupies residues 687 to 707 (MALRPAWPPVLGLSLIILLLL).

It belongs to the ERG4/ERG24 family. Interacts directly with LAM.

It localises to the nucleus inner membrane. Anchors the lamina and the heterochromatin to the inner nuclear membrane. In Drosophila melanogaster (Fruit fly), this protein is Lamin-B receptor.